A 417-amino-acid polypeptide reads, in one-letter code: uncharacterized protein (417 aa).

2 disordered regions span residues 1 to 41 and 233 to 262; these read MDSE…EDQA and QDSA…STRS. A compositionally biased stretch (basic and acidic residues) spans 31-41; that stretch reads DEDHIFHEDQA. Positions 235–245 are enriched in polar residues; it reads SAYNDQAPSTS.

This is an uncharacterized protein from Caenorhabditis elegans.